The sequence spans 154 residues: Pro-corazonin (154 aa).

The N-terminal stretch at 1-19 (MLRLLLLPLFLFTLSMCMG) is a signal peptide. Residue Gln-20 is modified to Pyrrolidone carboxylic acid. Asn-30 carries the post-translational modification Asparagine amide. Positions 70-154 (LERCLSQLQR…SAEPNVFGKH (85 aa)) are excised as a propeptide.

The protein belongs to the corazonin family. As to expression, expression is restricted to 24 neurons in the larval CNS (8 in the brain and 16 in the ventral nerve cord) and 12-16 neurons in the pars lateralis of the adult brain.

The protein localises to the secreted. Functionally, cardioactive peptide. Corazonin is probably involved in the physiological regulation of the heart beat. Clock (Clk) and cycle (cyc) proteins negatively regulate Crz transcription in a cell-specific manner. This chain is Pro-corazonin (Crz), found in Drosophila simulans (Fruit fly).